A 369-amino-acid polypeptide reads, in one-letter code: Transmembrane protein 144 homolog A (369 aa).

A run of 10 helical transmembrane segments spans residues 6–26, 35–55, 63–83, 85–105, 122–142, 221–241, 256–276, 288–308, 318–338, and 347–367; these read VIGY…YVPV, LSYA…AMMI, PIGI…IPII, LVGL…VGFF, DWMN…FFFI, VAGI…MIPM, IIFS…MFYA, TVFP…GLMI, GYPI…VFYF, and LLIL…LAFS.

The protein belongs to the TMEM144 family.

Its subcellular location is the membrane. The sequence is that of Transmembrane protein 144 homolog A (tmem144A) from Dictyostelium discoideum (Social amoeba).